A 167-amino-acid chain; its full sequence is 3-dehydroquinate dehydratase (167 aa).

Tyr-22 functions as the Proton acceptor in the catalytic mechanism. Substrate-binding residues include Asn-76, His-82, and Asp-89. His-102 serves as the catalytic Proton donor. Substrate-binding positions include Leu-103–Thr-104 and Arg-113.

This sequence belongs to the type-II 3-dehydroquinase family. Homododecamer.

It carries out the reaction 3-dehydroquinate = 3-dehydroshikimate + H2O. It participates in metabolic intermediate biosynthesis; chorismate biosynthesis; chorismate from D-erythrose 4-phosphate and phosphoenolpyruvate: step 3/7. Catalyzes a trans-dehydration via an enolate intermediate. This Helicobacter pylori (strain Shi470) protein is 3-dehydroquinate dehydratase.